The chain runs to 63 residues: Large ribosomal subunit protein uL29 (63 aa).

Belongs to the universal ribosomal protein uL29 family.

The chain is Large ribosomal subunit protein uL29 from Christiangramia forsetii (strain DSM 17595 / CGMCC 1.15422 / KT0803) (Gramella forsetii).